Reading from the N-terminus, the 155-residue chain is MSEADQKPVIIHTDGACSGNPGPGGWGAILKFGDVEKELKGGEPHTTNNRMELLAAISALEALTRPCSVDLYTDSQYVKNGIGSWIHNWKRNGWKTADKKPVKNVDLWQRLDAALKTHSIRWHWVKGHAGHAENERADQLARDGLTENRMKSRVK.

An RNase H type-1 domain is found at 5-146 (DQKPVIIHTD…ADQLARDGLT (142 aa)). Mg(2+)-binding residues include D14, E52, D74, and D138. The interval 133-155 (ENERADQLARDGLTENRMKSRVK) is disordered.

This sequence belongs to the RNase H family. As to quaternary structure, monomer. Mg(2+) is required as a cofactor.

The protein localises to the cytoplasm. It carries out the reaction Endonucleolytic cleavage to 5'-phosphomonoester.. Endonuclease that specifically degrades the RNA of RNA-DNA hybrids. This chain is Ribonuclease H, found in Rhodopseudomonas palustris (strain ATCC BAA-98 / CGA009).